Here is a 70-residue protein sequence, read N- to C-terminus: ATP synthase subunit c (70 aa).

2 consecutive transmembrane segments (helical) span residues isoleucine 4–valine 24 and phenylalanine 47–valine 67.

The protein belongs to the ATPase C chain family. F-type ATPases have 2 components, F(1) - the catalytic core - and F(0) - the membrane proton channel. F(1) has five subunits: alpha(3), beta(3), gamma(1), delta(1), epsilon(1). F(0) has three main subunits: a(1), b(2) and c(10-14). The alpha and beta chains form an alternating ring which encloses part of the gamma chain. F(1) is attached to F(0) by a central stalk formed by the gamma and epsilon chains, while a peripheral stalk is formed by the delta and b chains.

The protein localises to the cell membrane. In terms of biological role, f(1)F(0) ATP synthase produces ATP from ADP in the presence of a proton or sodium gradient. F-type ATPases consist of two structural domains, F(1) containing the extramembraneous catalytic core and F(0) containing the membrane proton channel, linked together by a central stalk and a peripheral stalk. During catalysis, ATP synthesis in the catalytic domain of F(1) is coupled via a rotary mechanism of the central stalk subunits to proton translocation. Its function is as follows. Key component of the F(0) channel; it plays a direct role in translocation across the membrane. A homomeric c-ring of between 10-14 subunits forms the central stalk rotor element with the F(1) delta and epsilon subunits. This Lactiplantibacillus plantarum (strain ATCC BAA-793 / NCIMB 8826 / WCFS1) (Lactobacillus plantarum) protein is ATP synthase subunit c.